A 394-amino-acid chain; its full sequence is Phosphopentomutase (394 aa).

Mn(2+) is bound by residues Asp14, Asp287, His292, Asp328, His329, and His340.

Belongs to the phosphopentomutase family. Mn(2+) is required as a cofactor.

It localises to the cytoplasm. The enzyme catalyses 2-deoxy-alpha-D-ribose 1-phosphate = 2-deoxy-D-ribose 5-phosphate. It catalyses the reaction alpha-D-ribose 1-phosphate = D-ribose 5-phosphate. It participates in carbohydrate degradation; 2-deoxy-D-ribose 1-phosphate degradation; D-glyceraldehyde 3-phosphate and acetaldehyde from 2-deoxy-alpha-D-ribose 1-phosphate: step 1/2. Its function is as follows. Isomerase that catalyzes the conversion of deoxy-ribose 1-phosphate (dRib-1-P) and ribose 1-phosphate (Rib-1-P) to deoxy-ribose 5-phosphate (dRib-5-P) and ribose 5-phosphate (Rib-5-P), respectively. This Shouchella clausii (strain KSM-K16) (Alkalihalobacillus clausii) protein is Phosphopentomutase.